The sequence spans 414 residues: MEKRRVVITGLGVVSPLGNKVSDMWQALLAGKSGVKPITRFDASSFPTQIAAEVRDFDPALVLDLKSIRKTDVFVQFAMESARQAWEDSGLEINETNAPRVGVAIGSGIGGMPWIEKNYDALLTSGPRKISPFFIPGAIINMASGMVSIKYDLKGPNISIVTACTTGLHNIGHAARMIAHNDADAMIAGGTEMASTPLGIGGFAAVRALSTRNDEPEKASRPWDKGRDGFVLGEGAACVVVEELEHAKKRNATIYAEIIGFGMSGDAYHMTRPDPEAEGFTTCMKNSLRDAGIAPERVDYINAHGTSTPAADPLEARAIKKTFGDHAYKLAVSSTKSMTGHMLGAAGALETVISVLAIRDNTAPPTINLENPDEGCDLDFVPNEAREMKIDTVMSNSFGFGGTNGTLVLSRVFD.

Residues 3 to 411 (KRRVVITGLG…GTNGTLVLSR (409 aa)) form the Ketosynthase family 3 (KS3) domain. Active-site for beta-ketoacyl synthase activity residues include Cys-164, His-304, and His-341.

The protein belongs to the thiolase-like superfamily. Beta-ketoacyl-ACP synthases family. As to quaternary structure, homodimer.

It carries out the reaction a fatty acyl-[ACP] + malonyl-[ACP] + H(+) = a 3-oxoacyl-[ACP] + holo-[ACP] + CO2. The catalysed reaction is (9Z)-hexadecenoyl-[ACP] + malonyl-[ACP] + H(+) = 3-oxo-(11Z)-octadecenoyl-[ACP] + holo-[ACP] + CO2. It participates in lipid metabolism; fatty acid biosynthesis. Involved in the type II fatty acid elongation cycle. Catalyzes the elongation of a wide range of acyl-ACP by the addition of two carbons from malonyl-ACP to an acyl acceptor. Can efficiently catalyze the conversion of palmitoleoyl-ACP (cis-hexadec-9-enoyl-ACP) to cis-vaccenoyl-ACP (cis-octadec-11-enoyl-ACP), an essential step in the thermal regulation of fatty acid composition. This is 3-oxoacyl-[acyl-carrier-protein] synthase 2 (fabF) from Coxiella burnetii (strain RSA 493 / Nine Mile phase I).